The sequence spans 97 residues: DNA-directed RNA polymerase subunit omega (97 aa).

This sequence belongs to the RNA polymerase subunit omega family. The RNAP catalytic core consists of 2 alpha, 1 beta, 1 beta' and 1 omega subunit. When a sigma factor is associated with the core the holoenzyme is formed, which can initiate transcription.

It catalyses the reaction RNA(n) + a ribonucleoside 5'-triphosphate = RNA(n+1) + diphosphate. In terms of biological role, promotes RNA polymerase assembly. Latches the N- and C-terminal regions of the beta' subunit thereby facilitating its interaction with the beta and alpha subunits. This chain is DNA-directed RNA polymerase subunit omega, found in Coxiella burnetii (strain Dugway 5J108-111).